A 122-amino-acid polypeptide reads, in one-letter code: Large ribosomal subunit protein uL18 (122 aa).

This sequence belongs to the universal ribosomal protein uL18 family. As to quaternary structure, part of the 50S ribosomal subunit; part of the 5S rRNA/L5/L18/L25 subcomplex. Contacts the 5S and 23S rRNAs.

This is one of the proteins that bind and probably mediate the attachment of the 5S RNA into the large ribosomal subunit, where it forms part of the central protuberance. The chain is Large ribosomal subunit protein uL18 from Leptospira biflexa serovar Patoc (strain Patoc 1 / Ames).